A 249-amino-acid chain; its full sequence is Aliphatic sulfonates import ATP-binding protein SsuB 2 (249 aa).

An ABC transporter domain is found at V15 to F231. G47–S54 provides a ligand contact to ATP.

This sequence belongs to the ABC transporter superfamily. Aliphatic sulfonates importer (TC 3.A.1.17.2) family. In terms of assembly, the complex is composed of two ATP-binding proteins (SsuB), two transmembrane proteins (SsuC) and a solute-binding protein (SsuA).

The protein localises to the cell inner membrane. It catalyses the reaction ATP + H2O + aliphatic sulfonate-[sulfonate-binding protein]Side 1 = ADP + phosphate + aliphatic sulfonateSide 2 + [sulfonate-binding protein]Side 1.. Its function is as follows. Part of the ABC transporter complex SsuABC involved in aliphatic sulfonates import. Responsible for energy coupling to the transport system. This is Aliphatic sulfonates import ATP-binding protein SsuB 2 from Rhizobium johnstonii (strain DSM 114642 / LMG 32736 / 3841) (Rhizobium leguminosarum bv. viciae).